The primary structure comprises 552 residues: MLQDKGLSESEEAFRAPGPALGEASNTSTTNAPEPALATPGLSGAALSSPPGQGADVAAAAAAAAEQTIENIKVGLHEKELWKKFHEAGTEMIITKAGRRMFPSYKVKVTGMNPKTKYILLIDIVPADDHRYKFCDNKWMVAGKAEPAMPGRLYVHPDSPATGAHWMRQLVSFQKLKLTNNHLDPFGHIILNSMHKYQPRLHIVKADENNAFGSKNTAFCTHVFPETSFISVTSYQNHKITQLKIENNPFAKGFRGSDDSDLRVARLQSKEYPVISKSIMRQRLVSSQLSAKPDVSPLHSAHQALQHYQYENGAHMQFAAAEPQDLPLNTFPTQRDSSLFYHCLKRRDSARHLDLPCKRSYLETPSSVGDDHYFRSPPPYDQQMLSPSYCSEVTPREACMYSSSGPEIAGVSAVDDLPPPPLSCNMWTSVSPYTSYSVQTMETVPYQPFPAHFTATTVMPRLPTIAAQSAQPPGNAHFSVYNQLSQSQVRERGPSASFPRERGLPGMCERKPPSPHLNTANEFLYSQSFSLTRESSLQYHSGMGTVENWTDG.

A compositionally biased stretch (basic and acidic residues) spans 1–14 (MLQDKGLSESEEAF). The segment at 1–50 (MLQDKGLSESEEAFRAPGPALGEASNTSTTNAPEPALATPGLSGAALSSP) is disordered. The T-box DNA-binding region spans 76–256 (LHEKELWKKF…NNPFAKGFRG (181 aa)). The residue at position 514 (serine 514) is a Phosphoserine.

The protein localises to the nucleus. In terms of biological role, transcriptional regulator that has an essential role in the organogenesis of lungs, pelvis, and hindlimbs. The polypeptide is T-box transcription factor TBX4 (Tbx4) (Mus musculus (Mouse)).